The sequence spans 73 residues: Neutrophil elastase 2B (73 aa).

A Peptidase S1 domain is found at 1–73; the sequence is IVGGRPARPH…SGGPLVCNGL (73 aa). Serine 64 functions as the Charge relay system in the catalytic mechanism.

The protein belongs to the peptidase S1 family. Elastase subfamily.

Its function is as follows. May be involved in the degradation of connective tissue in chronic lung disease. The sequence is that of Neutrophil elastase 2B from Equus caballus (Horse).